The sequence spans 320 residues: rRNA 2'-O-methyltransferase fibrillarin 2 (320 aa).

The disordered stretch occupies residues methionine 1–lysine 79. Gly residues-rich tracts occupy residues glycine 7–glycine 44 and proline 57–glycine 76. Residues threonine 167–threonine 168, glutamate 186–phenylalanine 187, aspartate 211–alanine 212, and aspartate 231–glutamine 234 contribute to the S-adenosyl-L-methionine site.

Belongs to the methyltransferase superfamily. Fibrillarin family. As to quaternary structure, component of box C/D small nucleolar ribonucleoprotein (snoRNP) particles. Interacts with groundnut rosette virus long-distance movement protein; this interaction is required for virus long-distance movement protein transiting through host Cajal body and nucleolus, relocalization of fibrillarin to the cytoplasm, and in presence of viral RNA, leads to the formation of stable RNPs. Interacts (via GAR domain) with the hordeivirus TGB1 movement protein (via the first 82 amino acid residues). Interacts with PRMT11 and PRMT12. Interacts with MED19A. Methylated by PRMT11 and PRMT12. As to expression, expressed in roots and flowers. Expressed in leaves and stems. Expression levels decrease during aging.

The protein resides in the nucleus. The protein localises to the nucleolus. It catalyses the reaction a ribonucleotide in rRNA + S-adenosyl-L-methionine = a 2'-O-methylribonucleotide in rRNA + S-adenosyl-L-homocysteine + H(+). The catalysed reaction is L-glutaminyl-[histone H2A] + S-adenosyl-L-methionine = N(5)-methyl-L-glutaminyl-[histone H2A] + S-adenosyl-L-homocysteine + H(+). In terms of biological role, S-adenosyl-L-methionine-dependent methyltransferase that has the ability to methylate both RNAs and proteins. Involved in pre-rRNA processing. Utilizes the methyl donor S-adenosyl-L-methionine to catalyze the site-specific 2'-hydroxyl methylation of ribose moieties in pre-ribosomal RNA. Site specificity is provided by a guide RNA that base pairs with the substrate. Methylation occurs at a characteristic distance from the sequence involved in base pairing with the guide RNA. Also acts as a protein methyltransferase by mediating methylation of 'Gln-105' of histone H2A (H2AQ105me), a modification that impairs binding of the FACT complex and is specifically present at 35S ribosomal DNA locus. Acts as a negative regulator of expression of immune responsive genes, including pathogenesis-related gene 1 (PR1), and of resistance against bacterial pathogen. Binds to MED19A, a positive regulator of PR1 expression, to repress the activator activity of MED19A. In response to the bacterial pathogen-associated molecular pattern (PAMP) elf18, associates with the long non-coding RNA (lncRNA) ELENA1 (At4g16355), and releases its repression of MED19A. Possesses ribonuclease activity toward rRNA in vitro. Binds phosphoinositides, phospholipids and phosphatidic acid in vitro. The sequence is that of rRNA 2'-O-methyltransferase fibrillarin 2 from Arabidopsis thaliana (Mouse-ear cress).